Consider the following 282-residue polypeptide: Phosphatidylglycerol--prolipoprotein diacylglyceryl transferase (282 aa).

3 consecutive transmembrane segments (helical) span residues 19-39 (IGPF…VFGW), 58-78 (ISLV…ILGG), and 104-124 (GGMS…WFAY). A 1,2-diacyl-sn-glycero-3-phospho-(1'-sn-glycerol) is bound at residue R149. The next 3 membrane-spanning stretches (helical) occupy residues 190–210 (AGME…LGAL), 214–234 (GMIL…GEHF), and 250–270 (MGML…VLAI).

The protein belongs to the Lgt family.

The protein localises to the cell inner membrane. The catalysed reaction is L-cysteinyl-[prolipoprotein] + a 1,2-diacyl-sn-glycero-3-phospho-(1'-sn-glycerol) = an S-1,2-diacyl-sn-glyceryl-L-cysteinyl-[prolipoprotein] + sn-glycerol 1-phosphate + H(+). It functions in the pathway protein modification; lipoprotein biosynthesis (diacylglyceryl transfer). In terms of biological role, catalyzes the transfer of the diacylglyceryl group from phosphatidylglycerol to the sulfhydryl group of the N-terminal cysteine of a prolipoprotein, the first step in the formation of mature lipoproteins. The sequence is that of Phosphatidylglycerol--prolipoprotein diacylglyceryl transferase from Bradyrhizobium diazoefficiens (strain JCM 10833 / BCRC 13528 / IAM 13628 / NBRC 14792 / USDA 110).